Here is a 177-residue protein sequence, read N- to C-terminus: MSAEDPNAGEDADAEEEEDIRYFVRIGQTDLDGTKSVERALTELNGIGHRAARIIAQKADVDRRAVFGKLDDDVIERVVERVENFADDVPEWMTNHQKDYFTGETTHETGNDLQLTRRQDINRMKMIDSYRGVRHKRGQKVRGQRTKSTGRTEGTIGVNVEAIKEEQAEDAAAEDDE.

A compositionally biased stretch (basic residues) spans 132-145; that stretch reads GVRHKRGQKVRGQR. The tract at residues 132-177 is disordered; it reads GVRHKRGQKVRGQRTKSTGRTEGTIGVNVEAIKEEQAEDAAAEDDE. The segment covering 167-177 has biased composition (acidic residues); the sequence is QAEDAAAEDDE.

It belongs to the universal ribosomal protein uS13 family. In terms of assembly, part of the 30S ribosomal subunit. Forms a loose heterodimer with protein S19. Forms two bridges to the 50S subunit in the 70S ribosome.

Located at the top of the head of the 30S subunit, it contacts several helices of the 16S rRNA. In the 70S ribosome it contacts the 23S rRNA (bridge B1a) and protein L5 of the 50S subunit (bridge B1b), connecting the 2 subunits; these bridges are implicated in subunit movement. The chain is Small ribosomal subunit protein uS13 from Haloarcula marismortui (strain ATCC 43049 / DSM 3752 / JCM 8966 / VKM B-1809) (Halobacterium marismortui).